The primary structure comprises 535 residues: Butyrophilin-like protein 9 (535 aa).

Residues 1–34 (MVDLSVSPDSLKPVSLTSSLVFLMHLLLLQPGEP) form the signal peptide. Residues 35–256 (SSEVKVLGPE…VFVPGASAWK (222 aa)) lie on the Extracellular side of the membrane. Residues 54–135 (EVEFPCHLWP…SDKGTYGCRF (82 aa)) enclose the Ig-like V-type domain. Cysteine 59 and cysteine 133 are disulfide-bonded. Residues asparagine 102, asparagine 139, and asparagine 224 are each glycosylated (N-linked (GlcNAc...) asparagine). A helical transmembrane segment spans residues 257–277 (SAFVATLPLLLVLAALALGVL). Positions 276 to 315 (VLRKQRRSREKLRKQAEKRQEKLTAELEKLQTELDWRRAE) form a coiled coil. Over 278–535 (RKQRRSREKL…EPADPALDWW (258 aa)) the chain is Cytoplasmic. The region spanning 310 to 509 (DWRRAEGQAE…LTICPLPVRG (200 aa)) is the B30.2/SPRY domain. A disordered region spans residues 340–367 (SLEVSEDGKSVSSRGAPPGPAPGHPQRF).

Belongs to the immunoglobulin superfamily. BTN/MOG family.

It is found in the membrane. In Homo sapiens (Human), this protein is Butyrophilin-like protein 9 (BTNL9).